The following is a 318-amino-acid chain: MEKIIIYGGTGYIGKFMVRASLSFSHPTFIYARPLTPDSTPSSVQLREEFRSMGVTIIEGEMEEHEKMVSVLRQVDVVISALSVPMYPSQLLIIDAIKAAGNIKRFLPSEFGSEEDRIKPLPPFESVLEKKRIIRRAIEAAELPYTYVSANCFGAYFVNYLLHPSPHPNRDDDIVIYGTGETKFVLNYEEDIAKYTIKVACDPRCCNRIVIYRPPKNIISQNELISLWEAKSGLSFKKVHMPDEQLVRLSQELPQPQNIPVSILHSIFVKGDLMSYEMRKDDIEASNLYPELEFTSIDGLLDLFISGRAPPPTLAEFE.

Residues 10–13, 32–43, arginine 33, 84–86, 109–111, lysine 131, and 151–153 contribute to the NADP(+) site; these read TGYI, ARPLTPDSTPSS, VPM, SEF, and NCF. Lysine 131 (proton donor/acceptor) is an active-site residue. Proline 260 provides a ligand contact to substrate.

It belongs to the NmrA-type oxidoreductase family. In terms of tissue distribution, mostly expressed in petals, and, to a lower extent, in sepals, stamens and pistils.

It carries out the reaction (E)-isoeugenol + acetate + NADP(+) = (E)-coniferyl acetate + NADPH. Its pathway is aromatic compound metabolism; phenylpropanoid biosynthesis. Its function is as follows. Catalyzes the synthesis of the phenylpropene isoeugenol from coniferyl acetate. Phenylpropenes are the primary constituents of various essential plant oils. They are produced as antimicrobial and antianimal compounds, or as floral attractants of pollinators. Isoeugenol is a characteristic aromatic constituent of spices and a floral volatile compound. This chain is Isoeugenol synthase 1, found in Clarkia breweri (Fairy fans).